The sequence spans 775 residues: ADP-ribosylation factor GTPase-activating protein AGD4 (775 aa).

The BAR domain occupies 2–226; sequence ATFINLEDSP…IHQILTYAQQ (225 aa). The 134-residue stretch at 288 to 421 folds into the PH domain; the sequence is EVIKQGYLLK…WVNKITKAIG (134 aa). One can recognise an Arf-GAP domain in the interval 467 to 603; it reads DDVSTILRGL…ALVIKDESEA (137 aa). The segment at 482 to 505 adopts a C4-type zinc-finger fold; that stretch reads CAECNAPEPDWASLNLGVLLCIQC. 2 ANK repeats span residues 682–711 and 715–744; these read QGCSLLHVACHIGDSVLLELLLQFGADLNI and HGRTPLHHCISSGNHKFAKILLRRGARPSI.

As to expression, expressed in roots, hypocotyls, cotyledons, leaf and shoot apical meristems and siliques.

In terms of biological role, probable GTPase-activating protein. In Arabidopsis thaliana (Mouse-ear cress), this protein is ADP-ribosylation factor GTPase-activating protein AGD4 (AGD4).